Reading from the N-terminus, the 104-residue chain is Large ribosomal subunit protein bL21 (104 aa).

Belongs to the bacterial ribosomal protein bL21 family. Part of the 50S ribosomal subunit. Contacts protein L20.

This protein binds to 23S rRNA in the presence of protein L20. This is Large ribosomal subunit protein bL21 from Helicobacter pylori (strain G27).